Consider the following 645-residue polypeptide: COP9 signalosome complex subunit 10 (645 aa).

Residues 1-45 (MSDEDNNYDDFMLSDDEGMESIEMEEETDDEDKQNIEINEDNSQD) are compositionally biased toward acidic residues. The disordered stretch occupies residues 1 to 63 (MSDEDNNYDD…HKQHEQGTFE (63 aa)). Basic and acidic residues predominate over residues 46–63 (DQDRGAARHKQHEQGTFE). Positions 348-543 (DLSFALMRYY…DLVYFGDENK (196 aa)) constitute a PCI domain.

Component of a COP9 signalosome-like (CSN) complex, composed of at least RRI1/CSN5, CSN9, RRI2/CSN10, PCI8/CSN11, CSN12 and CSI1. In the complex, it probably interacts directly with CSN12.

It is found in the cytoplasm. Its subcellular location is the nucleus. Its function is as follows. Component of the COP9 signalosome (CSN) complex that acts as an regulator of the ubiquitin (Ubl) conjugation pathway by mediating the deneddylation of the cullin subunit of SCF-type E3 ubiquitin-protein ligase complexes. The CSN complex is involved in the regulation of the mating pheromone response. The protein is COP9 signalosome complex subunit 10 (RRI2) of Saccharomyces cerevisiae (strain ATCC 204508 / S288c) (Baker's yeast).